The chain runs to 238 residues: Ion-translocating oxidoreductase complex subunit E (238 aa).

5 helical membrane passes run 41 to 61 (LGLG…VSLV), 71 to 91 (LPAF…LMQA), 95 to 115 (ELYQ…VILG), 130 to 150 (SFDG…LGGL), and 184 to 204 (GFLL…LIAL).

It belongs to the NqrDE/RnfAE family. As to quaternary structure, the complex is composed of six subunits: RnfA, RnfB, RnfC, RnfD, RnfE and RnfG.

It localises to the cell inner membrane. Part of a membrane-bound complex that couples electron transfer with translocation of ions across the membrane. The sequence is that of Ion-translocating oxidoreductase complex subunit E from Pseudomonas aeruginosa (strain LESB58).